A 214-amino-acid chain; its full sequence is Osteoclast-stimulating factor 1 (214 aa).

Ser2 carries the N-acetylserine modification. Residues 12-71 form the SH3 domain; sequence GQVKVFRALYTFEPRTPDELYFEEGDIIYITDMSDTNWWKGTSKGRTGLIPSNYVAEQAE. ANK repeat units lie at residues 72 to 101, 105 to 135, and 139 to 168; these read SIDN…GVNG, AGST…ELNQ, and LGDT…RTDL. Position 200 is a phosphothreonine (Thr200). Residues Ser202 and Ser213 each carry the phosphoserine modification.

Interacts with SRC and SMN1. Interacts with FASLG.

It localises to the cytoplasm. Its function is as follows. Induces bone resorption, acting probably through a signaling cascade which results in the secretion of factor(s) enhancing osteoclast formation and activity. The sequence is that of Osteoclast-stimulating factor 1 (OSTF1) from Sus scrofa (Pig).